The sequence spans 351 residues: Quinolinate phosphoribosyltransferase [decarboxylating] 2a, mitochondrial (351 aa).

Residues Arg142, 173-175 (TRK), Arg197, Lys207, Glu240, Asp267, 299-301 (SGN), and 320-322 (SGA) each bind substrate.

The protein belongs to the NadC/ModD family. As to expression, expressed in roots and flowers.

It localises to the mitochondrion. It catalyses the reaction nicotinate beta-D-ribonucleotide + CO2 + diphosphate = quinolinate + 5-phospho-alpha-D-ribose 1-diphosphate + 2 H(+). It participates in alkaloid biosynthesis; nicotine biosynthesis. Its pathway is cofactor biosynthesis; NAD(+) biosynthesis; nicotinate D-ribonucleotide from quinolinate: step 1/1. In terms of biological role, involved in the biosynthesis of pyridine alkaloid natural products, leading mainly to the production of anabasine, anatabine, nicotine and nornicotine, effective deterrents against herbivores with antiparasitic and pesticide properties (neurotoxins); nornicotine serves as the precursor in the synthesis of the carcinogen compound N'-nitrosonornicotine (NNN). Involved in the catabolism of quinolinic acid (QA). The polypeptide is Quinolinate phosphoribosyltransferase [decarboxylating] 2a, mitochondrial (Nicotiana tabacum (Common tobacco)).